Reading from the N-terminus, the 2627-residue chain is Telomerase protein component 1 (2627 aa).

TEP1 N-terminal repeat units lie at residues 1–30 (MEKL…DLQP), 31–60 (LEKL…DLKT), 61–90 (MEKP…DLKT), and 91–120 (MEKP…SLKS). Disordered stretches follow at residues 193-214 (FDSE…SLGE) and 383-402 (RKHR…GMEP). The TROVE domain occupies 223 to 676 (VKLTSGDSES…VKHSLPLLPG (454 aa)). Residues 383 to 395 (RKHRAKRHPRRPP) are compositionally biased toward basic residues. The NACHT domain maps to 1162 to 1490 (RLSLVTGQSG…PLERPGARLC (329 aa)). Position 1168–1175 (1168–1175 (GQSGQGKT)) interacts with ATP. WD repeat units lie at residues 1411 to 1448 (VLPQ…TKSW), 1674 to 1713 (AVSS…EEKS), 1716 to 1754 (SGCD…RVLQ), 1757 to 1796 (AHQY…LAFQ), 1798 to 1837 (TYPK…VTKD), 1840 to 1879 (APGA…RLAA), 1882 to 1921 (AHHG…PRGH), 1925 to 1964 (LSLS…QGAQ), 1967 to 2005 (ALDV…LQSL), 2008 to 2047 (LSRF…RPHK), 2059 to 2098 (GHEG…TPVL), 2105 to 2143 (CHRD…RLGQ), 2146 to 2183 (GHQS…LTSI), 2185 to 2233 (AHSG…QTHT), 2236 to 2275 (GHSG…DDTC), 2278 to 2317 (RSSA…ATAQ), 2319 to 2355 (PGHI…GSAP), 2368 to 2417 (EDLG…PMIL), and 2459 to 2500 (NPSR…GEWT). Positions 2506-2522 (QKKANTPETQTPGTDPS) are enriched in polar residues. Residues 2506 to 2551 (QKKANTPETQTPGTDPSTCRESDASMDSDASMDSEPTPHLKTRQRR) form a disordered region. 2 WD repeats span residues 2553–2590 (IHSG…LLGL) and 2592–2626 (RCEG…FLNW).

As to quaternary structure, associated component of the telomerase holoenzyme complex. Component of the vault ribonucleoprotein particle, at least composed of MVP, PARP4 and one or more vault RNAs (vRNAs). Binds to VAULTRC1, VAULTRC2 and VAULTRC4/hvg4 vRNAs. As to expression, ubiquitous.

It is found in the nucleus. Its subcellular location is the chromosome. The protein localises to the telomere. In terms of biological role, component of the telomerase ribonucleoprotein complex that is essential for the replication of chromosome termini. Also a component of the ribonucleoprotein vaults particle, a multi-subunit structure involved in nucleo-cytoplasmic transport. Responsible for the localizing and stabilizing vault RNA (vRNA) association in the vault ribonucleoprotein particle. Binds to TERC. This is Telomerase protein component 1 (TEP1) from Homo sapiens (Human).